A 552-amino-acid chain; its full sequence is Dihydroxy-acid dehydratase (552 aa).

Residue Asp-78 coordinates Mg(2+). Cys-119 serves as a coordination point for [2Fe-2S] cluster. Positions 120 and 121 each coordinate Mg(2+). N6-carboxylysine is present on Lys-121. Cys-191 lines the [2Fe-2S] cluster pocket. Residue Glu-442 coordinates Mg(2+). Ser-468 serves as the catalytic Proton acceptor.

Belongs to the IlvD/Edd family. Homodimer. It depends on [2Fe-2S] cluster as a cofactor. The cofactor is Mg(2+).

The catalysed reaction is (2R)-2,3-dihydroxy-3-methylbutanoate = 3-methyl-2-oxobutanoate + H2O. It catalyses the reaction (2R,3R)-2,3-dihydroxy-3-methylpentanoate = (S)-3-methyl-2-oxopentanoate + H2O. It participates in amino-acid biosynthesis; L-isoleucine biosynthesis; L-isoleucine from 2-oxobutanoate: step 3/4. Its pathway is amino-acid biosynthesis; L-valine biosynthesis; L-valine from pyruvate: step 3/4. Its function is as follows. Functions in the biosynthesis of branched-chain amino acids. Catalyzes the dehydration of (2R,3R)-2,3-dihydroxy-3-methylpentanoate (2,3-dihydroxy-3-methylvalerate) into 2-oxo-3-methylpentanoate (2-oxo-3-methylvalerate) and of (2R)-2,3-dihydroxy-3-methylbutanoate (2,3-dihydroxyisovalerate) into 2-oxo-3-methylbutanoate (2-oxoisovalerate), the penultimate precursor to L-isoleucine and L-valine, respectively. The chain is Dihydroxy-acid dehydratase from Caldicellulosiruptor saccharolyticus (strain ATCC 43494 / DSM 8903 / Tp8T 6331).